Consider the following 201-residue polypeptide: MQTSPLLTQLMEALRCLPGVGPKSAQRMAFTLLQRDRSGGMRLAQALTRAMSEIGHCADCRTFTEQEKCNICTNPRRQENGQICVVESPADIHAIEQTGQFSGRYFVLMGHLSPLDGIGPDDIGLDRLEQRLAAEPLKEIILATNPTVEGEATANYIAELCAQYGVDASRIAHGVPVGGELEMVDGTTLSHSLAGRHKMTF.

A C4-type zinc finger spans residues 57 to 72 (CADCRTFTEQEKCNIC). A Toprim domain is found at 81–176 (GQICVVESPA…DASRIAHGVP (96 aa)).

The protein belongs to the RecR family.

In terms of biological role, may play a role in DNA repair. It seems to be involved in an RecBC-independent recombinational process of DNA repair. It may act with RecF and RecO. This is Recombination protein RecR from Cronobacter sakazakii (strain ATCC BAA-894) (Enterobacter sakazakii).